A 584-amino-acid polypeptide reads, in one-letter code: Tyrosine-protein kinase Dnt (584 aa).

An N-terminal signal peptide occupies residues 1 to 40 (MESVNKCGKSASTRNCTVKMSRKMWVLSLLALAALQLHSG). The Extracellular portion of the chain corresponds to 41–208 (SEVAAHLNVF…LETVMLPPTG (168 aa)). The WIF domain maps to 49–180 (VFLNPVEVMR…HLVFRRKKIC (132 aa)). Asparagine 124, asparagine 163, asparagine 168, and asparagine 183 each carry an N-linked (GlcNAc...) asparagine glycan. Residues 209-229 (LITLVVGVSVAMGSVCLLLMI) traverse the membrane as a helical segment. At 230–584 (AYCVKGAANK…EFYSQITRYV (355 aa)) the chain is on the cytoplasmic side. Positions 241-261 (QHHQHGGQPMRTSSFQRLNTH) are disordered. Residues 250–261 (MRTSSFQRLNTH) show a composition bias toward polar residues. In terms of domain architecture, Protein kinase spans 317–577 (VRLSSLLQEG…QLQSCLSEFY (261 aa)). ATP contacts are provided by residues 323–331 (LQEGTFGRV) and lysine 345. Aspartate 442 functions as the Proton acceptor in the catalytic mechanism. Phosphotyrosine; by autocatalysis is present on tyrosine 472.

It belongs to the protein kinase superfamily. Tyr protein kinase family. Expressed in dynamic domains in the embryonic epidermis, many of which border on sites of epithelial invagination into the embryo interior, including ventral furrow, cephalic furrow, fore- and hindgut, optic lobe and tracheal pits. Later in embryogenesis, expression is seen in imaginal tissues.

The protein resides in the cell membrane. The enzyme catalyses L-tyrosyl-[protein] + ATP = O-phospho-L-tyrosyl-[protein] + ADP + H(+). Its function is as follows. May play an essential role in neuronal pathway recognition and ventral muscle attachment site selection. This is Tyrosine-protein kinase Dnt (dnt) from Drosophila melanogaster (Fruit fly).